Consider the following 85-residue polypeptide: F(1)-ATPase inhibitor IF(1), mitochondrial (85 aa).

The transit peptide at 1 to 22 (MLPRSALARSLQLQRGVAARFY) directs the protein to the mitochondrion. Positions 41 to 84 (KRERATEDFFVRQREKEQLRHLKEQLEKQRKKIDSLENKIDSMT) form a coiled coil.

It belongs to the ATPase inhibitor family. Monomer and homodimer. The protein aggregates less strongly with increasing pH.

Its subcellular location is the mitochondrion. In terms of biological role, endogenous ATPase inhibitor, which inhibits specifically the reverse ATPase reaction of mitochondrial F(1)F(0)-type ATP synthase. It limits ATP depletion when the mitochondrial membrane potential falls below a threshold and the F(1)F(0)-ATP synthase starts hydrolyzing ATP to pump protons out of the mitochondrial matrix. Required to avoid the consumption of cellular ATP when the F(1)F(0)-ATP synthase enzyme acts as an ATP hydrolase. Functions through inserting its N-terminal part into the catalytically active F1-ATPase, thereby blocking its rotational movement and subsequently the ATP hydrolase activity. In Saccharomyces cerevisiae (strain ATCC 204508 / S288c) (Baker's yeast), this protein is F(1)-ATPase inhibitor IF(1), mitochondrial (INH1).